Consider the following 502-residue polypeptide: Chromosomal replication initiator protein DnaA (502 aa).

Residues 1 to 112 (MADDLSLGFT…PSTDHIDDNS (112 aa)) form a domain I, interacts with DnaA modulators region. The segment at 113–161 (SSADVLLTDDCGTDTDENYGEPLTGEYQGLPTYFTERPHHTESTVTGGT) is domain II. Positions 162–378 (SLNRRYTFET…GALIRVTAFA (217 aa)) are domain III, AAA+ region. The ATP site is built by G206, G208, K209, and T210. Positions 379-502 (SLNKTAIDKA…TTRIRQRSKR (124 aa)) are domain IV, binds dsDNA.

It belongs to the DnaA family. Oligomerizes as a right-handed, spiral filament on DNA at oriC.

It localises to the cytoplasm. In terms of biological role, plays an essential role in the initiation and regulation of chromosomal replication. ATP-DnaA binds to the origin of replication (oriC) to initiate formation of the DNA replication initiation complex once per cell cycle. Binds the DnaA box (a 9 base pair repeat at the origin) and separates the double-stranded (ds)DNA. Forms a right-handed helical filament on oriC DNA; dsDNA binds to the exterior of the filament while single-stranded (ss)DNA is stabiized in the filament's interior. The ATP-DnaA-oriC complex binds and stabilizes one strand of the AT-rich DNA unwinding element (DUE), permitting loading of DNA polymerase. After initiation quickly degrades to an ADP-DnaA complex that is not apt for DNA replication. Binds acidic phospholipids. This chain is Chromosomal replication initiator protein DnaA, found in Mycobacterium leprae (strain TN).